Here is a 122-residue protein sequence, read N- to C-terminus: Sperm-egg fusion protein LLCFC1 (122 aa).

A signal peptide spans 1-28 (MPPLAPQLCRAVFLVPILLLLQVKPLNG). Residues 27 to 51 (NGSPGPKDGSQTEKTPSADQNQEQF) are disordered. Over residues 38–49 (TEKTPSADQNQE) the composition is skewed to polar residues.

It is found in the secreted. Its function is as follows. Sperm protein required for fusion of sperm with the egg membrane during fertilization. This chain is Sperm-egg fusion protein LLCFC1, found in Homo sapiens (Human).